The sequence spans 206 residues: Small ribosomal subunit protein uS4 (206 aa).

The disordered stretch occupies residues 18 to 46; that stretch reads NIWGRPKSPVNRREYGPGQHGQRRKQKMS. The S4 RNA-binding domain occupies 94 to 154; it reads RRLDAVVYRA…EKSRQMAALL (61 aa).

It belongs to the universal ribosomal protein uS4 family. Part of the 30S ribosomal subunit. Contacts protein S5. The interaction surface between S4 and S5 is involved in control of translational fidelity.

Its function is as follows. One of the primary rRNA binding proteins, it binds directly to 16S rRNA where it nucleates assembly of the body of the 30S subunit. In terms of biological role, with S5 and S12 plays an important role in translational accuracy. The protein is Small ribosomal subunit protein uS4 of Dinoroseobacter shibae (strain DSM 16493 / NCIMB 14021 / DFL 12).